A 1060-amino-acid chain; its full sequence is RNA-binding protein 27 (1060 aa).

Composition is skewed to basic and acidic residues over residues 91–102 (LVQEKEEIKEEV) and 124–143 (TRSE…DGKW). 2 disordered regions span residues 91 to 143 (LVQE…DGKW) and 162 to 235 (WRRG…GAQS). Positions 165 to 185 (GRSKSRSKSRGLSRSRSRSRG) are enriched in basic residues. A compositionally biased stretch (basic and acidic residues) spans 186-211 (RSKDRDPNRNVEHRERSKFKSERNDL). Polar residues predominate over residues 225-235 (SSEQYSSGAQS). A C3H1-type zinc finger spans residues 273 to 301 (LPPKRRCRDYDERGFCVLGDLCQFDHGND). Pro residues-rich tracts occupy residues 319 to 356 (PPPG…PGPG) and 371 to 384 (QPPP…PRPP). A disordered region spans residues 319–412 (PPPGLPPPPP…PNLASVGTRL (94 aa)). Positions 386 to 402 (TQSSLINSRDQPGTSAV) are enriched in polar residues. The residue at position 447 (threonine 447) is a Phosphothreonine. Position 455 is an omega-N-methylarginine (arginine 455). Residues 565–592 (MSGLEGPLTKKPWLGKQGNNNQNKPGFL) form a disordered region. Residues 579-588 (GKQGNNNQNK) are compositionally biased toward low complexity. The 75-residue stretch at 600 to 674 (TKLEVKKIPQ…RFIRVLWHRE (75 aa)) folds into the RRM domain. Residues 809–886 (VQEVLKKKQE…KDELKTSSAV (78 aa)) adopt a coiled-coil conformation. Serine 927 is modified (phosphoserine). Disordered regions lie at residues 940–968 (PVGR…SLNH) and 1006–1060 (DRRL…SWRR). 2 positions are modified to phosphoserine: serine 1012 and serine 1020. A compositionally biased stretch (acidic residues) spans 1024–1053 (ETEEEEVKEEETETSDLFLPDDDDEDEDEY).

The protein resides in the cytoplasm. The protein localises to the nucleus speckle. May be involved in the turnover of nuclear polyadenylated (pA+) RNA. This chain is RNA-binding protein 27, found in Homo sapiens (Human).